Here is a 50-residue protein sequence, read N- to C-terminus: Cytochrome c-555 (50 aa).

Heme is bound by residues Cys7, Cys10, His11, and Met25.

Post-translationally, binds 1 heme group per subunit.

It is found in the cell membrane. This chain is Cytochrome c-555, found in Schinkia azotoformans (Bacillus azotoformans).